Here is a 278-residue protein sequence, read N- to C-terminus: Probable CCR4-associated factor 1 homolog 5 (278 aa).

Residues Asp-30, Glu-32, Asp-145, and Asp-217 each contribute to the a divalent metal cation site.

Belongs to the CAF1 family. In terms of assembly, component of the CCR4-NOT complex, at least composed of CRR4 and CAF1 proteins. It depends on a divalent metal cation as a cofactor.

The protein localises to the nucleus. The protein resides in the cytoplasm. It carries out the reaction Exonucleolytic cleavage of poly(A) to 5'-AMP.. In terms of biological role, ubiquitous transcription factor required for a diverse set of processes. It is a component of the CCR4 complex involved in the control of gene expression. This chain is Probable CCR4-associated factor 1 homolog 5 (CAF1-5), found in Arabidopsis thaliana (Mouse-ear cress).